Consider the following 218-residue polypeptide: Adenylate kinase (218 aa).

An ATP-binding site is contributed by G10–T15. An NMP region spans residues S30–V59. AMP is bound by residues T31, R36, E57–V59, G86–R89, and Q93. The segment at G127–D164 is LID. Residues R128 and V137–Y138 each bind ATP. 2 residues coordinate AMP: R161 and R172. Q200 is an ATP binding site.

Belongs to the adenylate kinase family. In terms of assembly, monomer.

Its subcellular location is the cytoplasm. It catalyses the reaction AMP + ATP = 2 ADP. Its pathway is purine metabolism; AMP biosynthesis via salvage pathway; AMP from ADP: step 1/1. In terms of biological role, catalyzes the reversible transfer of the terminal phosphate group between ATP and AMP. Plays an important role in cellular energy homeostasis and in adenine nucleotide metabolism. The sequence is that of Adenylate kinase from Chloroherpeton thalassium (strain ATCC 35110 / GB-78).